The following is a 448-amino-acid chain: ATP-dependent protease ATPase subunit HslU (448 aa).

ATP contacts are provided by residues Ile-23, 65–70 (GIGKTE), Asp-263, Glu-327, and Arg-399.

Belongs to the ClpX chaperone family. HslU subfamily. In terms of assembly, a double ring-shaped homohexamer of HslV is capped on each side by a ring-shaped HslU homohexamer. The assembly of the HslU/HslV complex is dependent on binding of ATP.

It localises to the cytoplasm. Functionally, ATPase subunit of a proteasome-like degradation complex; this subunit has chaperone activity. The binding of ATP and its subsequent hydrolysis by HslU are essential for unfolding of protein substrates subsequently hydrolyzed by HslV. HslU recognizes the N-terminal part of its protein substrates and unfolds these before they are guided to HslV for hydrolysis. In Borreliella burgdorferi (strain ATCC 35210 / DSM 4680 / CIP 102532 / B31) (Borrelia burgdorferi), this protein is ATP-dependent protease ATPase subunit HslU.